A 265-amino-acid chain; its full sequence is MKSVLGFKKAKVTQEKISMVTCYDYTLAKIINSTDIDCILVGDSGGMVLLGKKNTTYTTLDDMQFMTQAVANGATDKFIVADLPFMSYRQSLETTMQAVMALIQSGAHAIKLEGSSGNLDIIKHIVDSGVPIMGHIGMTPQFINSFGGFKVQGRTEEAAKHLLEEAKLLEQAGCFGIVLECIPANIAKDITQNLDIPTIGIGAGSNTDGQILVLQDMLGMNTDFQPKFVKKYIDGSKLFSDAINTYVKETKANTFPTKEHCYDYC.

2 residues coordinate Mg(2+): D43 and D82. 3-methyl-2-oxobutanoate is bound by residues 43–44, D82, and K111; that span reads DS. E113 contacts Mg(2+). E180 acts as the Proton acceptor in catalysis.

It belongs to the PanB family. Homodecamer; pentamer of dimers. Requires Mg(2+) as cofactor.

It localises to the cytoplasm. It catalyses the reaction 3-methyl-2-oxobutanoate + (6R)-5,10-methylene-5,6,7,8-tetrahydrofolate + H2O = 2-dehydropantoate + (6S)-5,6,7,8-tetrahydrofolate. Its pathway is cofactor biosynthesis; (R)-pantothenate biosynthesis; (R)-pantoate from 3-methyl-2-oxobutanoate: step 1/2. Its function is as follows. Catalyzes the reversible reaction in which hydroxymethyl group from 5,10-methylenetetrahydrofolate is transferred onto alpha-ketoisovalerate to form ketopantoate. The sequence is that of 3-methyl-2-oxobutanoate hydroxymethyltransferase from Francisella tularensis subsp. holarctica (strain OSU18).